Reading from the N-terminus, the 407-residue chain is Digeranylgeranylglycerophospholipid reductase (407 aa).

The FAD site is built by alanine 15, glutamate 34, cysteine 45, alanine 46, glycine 48, arginine 99, alanine 123, aspartate 281, glycine 293, and isoleucine 294.

The protein belongs to the geranylgeranyl reductase family. DGGGPL reductase subfamily. Requires FAD as cofactor.

The enzyme catalyses a 2,3-bis-O-phytanyl-sn-glycerol 1-phospholipid + 8 oxidized 2[4Fe-4S]-[ferredoxin] = a 2,3-bis-O-(geranylgeranyl)-sn-glycerol 1-phospholipid + 8 reduced 2[4Fe-4S]-[ferredoxin] + 16 H(+). The catalysed reaction is 2,3-bis-O-(phytanyl)-sn-glycerol 1-phosphate + 8 oxidized 2[4Fe-4S]-[ferredoxin] = 2,3-bis-O-(geranylgeranyl)-sn-glycerol 1-phosphate + 8 reduced 2[4Fe-4S]-[ferredoxin] + 16 H(+). It catalyses the reaction a 2,3-bis-O-phytanyl-sn-glycerol 1-phospholipid + 8 A = a 2,3-bis-O-(geranylgeranyl)-sn-glycerol 1-phospholipid + 8 AH2. It carries out the reaction CDP-2,3-bis-O-(geranylgeranyl)-sn-glycerol + 8 AH2 = CDP-2,3-bis-O-(phytanyl)-sn-glycerol + 8 A. The enzyme catalyses archaetidylserine + 8 AH2 = 2,3-bis-O-phytanyl-sn-glycero-3-phospho-L-serine + 8 A. The protein operates within membrane lipid metabolism; glycerophospholipid metabolism. Its function is as follows. Is involved in the reduction of 2,3-digeranylgeranylglycerophospholipids (unsaturated archaeols) into 2,3-diphytanylglycerophospholipids (saturated archaeols) in the biosynthesis of archaeal membrane lipids. Catalyzes the formation of archaetidic acid (2,3-di-O-phytanyl-sn-glyceryl phosphate) from 2,3-di-O-geranylgeranylglyceryl phosphate (DGGGP) via the hydrogenation of each double bond of the isoprenoid chains. Is also probably able to reduce double bonds of geranyl groups in CDP-2,3-bis-O-(geranylgeranyl)-sn-glycerol and archaetidylserine, thus acting at various stages in the biosynthesis of archaeal membrane lipids. In Methanosarcina mazei (strain ATCC BAA-159 / DSM 3647 / Goe1 / Go1 / JCM 11833 / OCM 88) (Methanosarcina frisia), this protein is Digeranylgeranylglycerophospholipid reductase.